Here is a 600-residue protein sequence, read N- to C-terminus: MTALSNIRNFSIIAHIDHGKSTLADRFIQTCGALQDREMQAQVLDSMDIERERGITIKAQSVTLYYDHPNGERYQLNFIDTPGHVDFSYEVSRSLAACEGALLVVDAAQGVEAQSVANCYTAVDLGLEVLPVLNKIDLPQVEPERVIQEIEDIIGIEADDAPRVSAKSGLGVDELLEALVERIPAPTGDRDAPLQALIIDSWFDNYLGVVSLVRVRQGSLSKGDKILIKSTMDSHLVTSIGVFTPKPLETGKLEAGEVGFVIAGIKDIHGAPVGDTMTHAKTPDVDLIPGFKQITPQVYAGLFPVDSSDFEKFREALQKLQINDSALFFEPDTSDALGFGFRCGFLGMLHMEIIQERLEREYNLDLITTAPSVIYEIKKKNGEILLIDNPSRLPDPGFVEEFREPIARCHILVPQDYLGNVMTLCMERRGTQVDMRFMGKQVQLIFDIPLGEVVMDFFDRLKSVSRGFASLDYEFDRYEVDKLVKVDVLINGDKVDALAMICHQEQARYRGGQLVEKMKELIPRQMFDVAIQAAIGSQIIARSTVKAMRKDVLAKCYGGDVSRKKKLLSKQKEGKKRMKQVGSVEIPQEAFLAVLQVDNQ.

The tr-type G domain maps to 5–187; that stretch reads SNIRNFSIIA…ALVERIPAPT (183 aa). GTP is bound by residues 17-22 and 134-137; these read DHGKST and NKID.

It belongs to the TRAFAC class translation factor GTPase superfamily. Classic translation factor GTPase family. LepA subfamily.

The protein localises to the cell inner membrane. It catalyses the reaction GTP + H2O = GDP + phosphate + H(+). In terms of biological role, required for accurate and efficient protein synthesis under certain stress conditions. May act as a fidelity factor of the translation reaction, by catalyzing a one-codon backward translocation of tRNAs on improperly translocated ribosomes. Back-translocation proceeds from a post-translocation (POST) complex to a pre-translocation (PRE) complex, thus giving elongation factor G a second chance to translocate the tRNAs correctly. Binds to ribosomes in a GTP-dependent manner. This is Elongation factor 4 from Psychrobacter sp. (strain PRwf-1).